Consider the following 493-residue polypeptide: Cytochrome c-552 (493 aa).

The signal sequence occupies residues 1–25 (MEKKLKSWQGWLLFCGAMAVVFVLG). Residue histidine 116 participates in heme c binding. Cysteine 144, cysteine 147, and lysine 148 together coordinate heme. Cysteine 182, cysteine 185, histidine 186, cysteine 224, cysteine 227, and histidine 228 together coordinate heme c. Residues glutamate 230, tyrosine 231, lysine 276, and glutamine 278 each coordinate Ca(2+). Tyrosine 231 is a binding site for substrate. Histidine 279 lines the substrate pocket. Heme c-binding residues include histidine 290, cysteine 297, cysteine 300, histidine 301, histidine 315, cysteine 328, cysteine 331, histidine 332, and histidine 407.

Belongs to the cytochrome c-552 family. Ca(2+) is required as a cofactor. It depends on heme c as a cofactor.

The protein localises to the periplasm. It catalyses the reaction 6 Fe(III)-[cytochrome c] + NH4(+) + 2 H2O = 6 Fe(II)-[cytochrome c] + nitrite + 8 H(+). Its pathway is nitrogen metabolism; nitrate reduction (assimilation). Its function is as follows. Catalyzes the reduction of nitrite to ammonia, consuming six electrons in the process. In Bacteroides fragilis (strain YCH46), this protein is Cytochrome c-552.